The following is a 138-amino-acid chain: Putative membrane protein ORF6 (138 aa).

Transmembrane regions (helical) follow at residues 4-20 and 37-53; these read LTII…HAVL and VVVL…LMTI.

It is found in the membrane. The chain is Putative membrane protein ORF6 (ORF6) from Ictalurid herpesvirus 1 (strain Auburn) (IcHV-1).